The chain runs to 139 residues: Large ribosomal subunit protein uL16 (139 aa).

Belongs to the universal ribosomal protein uL16 family. As to quaternary structure, part of the 50S ribosomal subunit.

Functionally, binds 23S rRNA and is also seen to make contacts with the A and possibly P site tRNAs. This chain is Large ribosomal subunit protein uL16, found in Chlorobium phaeobacteroides (strain DSM 266 / SMG 266 / 2430).